We begin with the raw amino-acid sequence, 318 residues long: ADP-L-glycero-D-manno-heptose-6-epimerase (318 aa).

NADP(+) is bound by residues 10–11 (FI), 31–32 (DD), K38, K53, 80–84 (EGACS), and N97. The Proton acceptor role is filled by Y144. K148 lines the NADP(+) pocket. A substrate-binding site is contributed by N173. Residues V174 and K182 each coordinate NADP(+). Catalysis depends on K182, which acts as the Proton acceptor. Residues K184, H191, 205 to 208 (FGAW), R218, and Y282 contribute to the substrate site.

It belongs to the NAD(P)-dependent epimerase/dehydratase family. HldD subfamily. In terms of assembly, homopentamer. NADP(+) serves as cofactor.

The enzyme catalyses ADP-D-glycero-beta-D-manno-heptose = ADP-L-glycero-beta-D-manno-heptose. It functions in the pathway nucleotide-sugar biosynthesis; ADP-L-glycero-beta-D-manno-heptose biosynthesis; ADP-L-glycero-beta-D-manno-heptose from D-glycero-beta-D-manno-heptose 7-phosphate: step 4/4. Functionally, catalyzes the interconversion between ADP-D-glycero-beta-D-manno-heptose and ADP-L-glycero-beta-D-manno-heptose via an epimerization at carbon 6 of the heptose. The protein is ADP-L-glycero-D-manno-heptose-6-epimerase of Chromohalobacter salexigens (strain ATCC BAA-138 / DSM 3043 / CIP 106854 / NCIMB 13768 / 1H11).